A 544-amino-acid polypeptide reads, in one-letter code: Neurofilament light polypeptide (544 aa).

Serine 2 carries the post-translational modification N-acetylserine. Residues 2 to 87 (SSYSYDPYYT…KIVRTQEKVQ (86 aa)) form a head region. The region spanning 84-394 (EKVQLQDLND…KLLEGEETRL (311 aa)) is the IF rod domain. Residues 88–119 (LQDLNDRFANFIERVHELEQRNKVLEAELLLL) are coil 1A. A linker 1 region spans residues 120-132 (RQKHNEPSRLRDM). Positions 133-228 (YEKEVRDVRL…KVHEEELSQL (96 aa)) are coil 1B. The interval 229 to 246 (QSQVQYAQVSLEVEVAKP) is linker 12. The tract at residues 247-265 (DLSSALRDIRGQYEKLAAK) is coil 2A. The tract at residues 266–274 (NMQSAEEWF) is linker 2. A coil 2B region spans residues 275–390 (KSRFTVLTQS…AAYRKLLEGE (116 aa)). Residues 391–435 (ETRLSFSGVGAITSGYTQSAPVFGRSAYSLQSSSYMTSRAFPTYY) are tail, subdomain A. The tract at residues 391–544 (ETRLSFSGVG…EESEKKEKKK (154 aa)) is tail. The tail, subdomain B (acidic) stretch occupies residues 436–544 (SSHVQEEQLD…EESEKKEKKK (109 aa)). Positions 450-544 (IESSRAEEAK…EESEKKEKKK (95 aa)) are disordered. Positions 451 to 462 (ESSRAEEAKAEA) are enriched in basic and acidic residues. A compositionally biased stretch (acidic residues) spans 463–525 (PEEEEEEAAE…EAEGDGEEEG (63 aa)). Positions 526 to 544 (ESKGDEAAEEESEKKEKKK) are enriched in basic and acidic residues.

This sequence belongs to the intermediate filament family. Forms homodimers (in vitro).

The protein resides in the cell projection. It localises to the axon. The protein localises to the cytoplasm. Its subcellular location is the cytoskeleton. Its function is as follows. Neurofilaments usually contain three intermediate filament proteins: NEFL, NEFM, and NEFH which are involved in the maintenance of neuronal caliber. May additionally cooperate with other neuronal intermediate filament proteins to form neuronal filamentous networks. The polypeptide is Neurofilament light polypeptide (nefl) (Xenopus laevis (African clawed frog)).